The following is a 303-amino-acid chain: Sulfotransferase 6B1 (303 aa).

Residue 65–70 (KCGSNW) coordinates 3'-phosphoadenylyl sulfate. Histidine 118 functions as the Proton acceptor in the catalytic mechanism. 3'-phosphoadenylyl sulfate-binding positions include arginine 140, serine 148, tyrosine 203, 237 to 242 (STFQAM), and 259 to 261 (RKG).

It belongs to the sulfotransferase 1 family.

The protein localises to the cytoplasm. Its subcellular location is the cytosol. The catalysed reaction is thyroxine + 3'-phosphoadenylyl sulfate = thyroxine sulfate + adenosine 3',5'-bisphosphate + H(+). Sulfotransferase that utilizes 3'-phospho-5'-adenylyl sulfate (PAPS) as sulfonate donor to catalyze the sulfate conjugation of thyroxine. Involved in the metabolism of thyroxine. In Gorilla gorilla gorilla (Western lowland gorilla), this protein is Sulfotransferase 6B1 (SULT6B1).